Here is a 278-residue protein sequence, read N- to C-terminus: Inner membrane mitoribosome receptor MBA1, mitochondrial (278 aa).

The transit peptide at 1 to 33 directs the protein to the mitochondrion; the sequence is MSVLRSTCLFFPPRSLLISFNKRRLFSTSRLIL.

In terms of assembly, interacts with OXA1 and MDM38. Binds to mitoribosomes in order to recruit them to the mitochondrial inner membrane.

The protein resides in the mitochondrion inner membrane. Its function is as follows. Mitochondrial inner membrane-associated mitoribosome receptor that spatially aligns the mitoribosome exit tunnel with the membrane insertion machinery and allows cotranslational protein membrane insertion. In Saccharomyces cerevisiae (strain ATCC 204508 / S288c) (Baker's yeast), this protein is Inner membrane mitoribosome receptor MBA1, mitochondrial.